The primary structure comprises 466 residues: DNA repair protein RadA (466 aa).

The segment at 12–29 (CSECQHVAPKWVGRCANC) adopts a C4-type zinc-finger fold. 100–107 (GDPGVGKS) is a binding site for ATP. The RadA KNRFG motif signature appears at 261-265 (KNRFG). The tract at residues 359-466 (DLYLSTVGGM…MREIAIAGAQ (108 aa)) is lon-protease-like.

It belongs to the RecA family. RadA subfamily. As to quaternary structure, interacts with DisA.

Functionally, DNA-dependent ATPase involved in processing of recombination intermediates, plays a role in repairing DNA breaks. Stimulates the branch migration of RecA-mediated strand transfer reactions, allowing the 3' invading strand to extend heteroduplex DNA faster. Binds ssDNA in the presence of ADP but not other nucleotides, has ATPase activity that is stimulated by ssDNA and various branched DNA structures, but inhibited by SSB. Does not have RecA's homology-searching function. Also inhibits the diadenylate cyclase activity of DisA. This chain is DNA repair protein RadA, found in Mycolicibacterium smegmatis (strain ATCC 700084 / mc(2)155) (Mycobacterium smegmatis).